The following is a 458-amino-acid chain: Homogentisate 1,2-dioxygenase (458 aa).

Histidine 308 acts as the Proton acceptor in catalysis. Histidine 351 and glutamate 357 together coordinate Fe cation. Residues tyrosine 366 and histidine 387 each contribute to the homogentisate site. Residue histidine 387 coordinates Fe cation.

It belongs to the homogentisate dioxygenase family. Hexamer; dimer of trimers. Requires Fe cation as cofactor.

The enzyme catalyses homogentisate + O2 = 4-maleylacetoacetate + H(+). It functions in the pathway amino-acid degradation; L-phenylalanine degradation; acetoacetate and fumarate from L-phenylalanine: step 4/6. In terms of biological role, involved in the catabolism of homogentisate (2,5-dihydroxyphenylacetate or 2,5-OH-PhAc), a central intermediate in the degradation of phenylalanine and tyrosine. Catalyzes the oxidative ring cleavage of the aromatic ring of homogentisate to yield maleylacetoacetate. The chain is Homogentisate 1,2-dioxygenase from Xanthomonas axonopodis pv. citri (strain 306).